The primary structure comprises 121 residues: Large ribosomal subunit protein bL12 (121 aa).

This sequence belongs to the bacterial ribosomal protein bL12 family. As to quaternary structure, homodimer. Part of the ribosomal stalk of the 50S ribosomal subunit. Forms a multimeric L10(L12)X complex, where L10 forms an elongated spine to which 2 to 4 L12 dimers bind in a sequential fashion. Binds GTP-bound translation factors.

In terms of biological role, forms part of the ribosomal stalk which helps the ribosome interact with GTP-bound translation factors. Is thus essential for accurate translation. In Aliivibrio salmonicida (strain LFI1238) (Vibrio salmonicida (strain LFI1238)), this protein is Large ribosomal subunit protein bL12.